The sequence spans 137 residues: uncharacterized protein (137 aa).

Positions 4-73 (MLTVSEVARK…LEEIADILHL (70 aa)) constitute an HTH merR-type domain. Residues 8–27 (SEVARKLGLNPQTLYFYERI) constitute a DNA-binding region (H-T-H motif).

This is an uncharacterized protein from Synechocystis sp. (strain ATCC 27184 / PCC 6803 / Kazusa).